Here is a 352-residue protein sequence, read N- to C-terminus: UDP-3-O-acylglucosamine N-acyltransferase (352 aa).

Histidine 242 functions as the Proton acceptor in the catalytic mechanism.

This sequence belongs to the transferase hexapeptide repeat family. LpxD subfamily. In terms of assembly, homotrimer.

It carries out the reaction a UDP-3-O-[(3R)-3-hydroxyacyl]-alpha-D-glucosamine + a (3R)-hydroxyacyl-[ACP] = a UDP-2-N,3-O-bis[(3R)-3-hydroxyacyl]-alpha-D-glucosamine + holo-[ACP] + H(+). It functions in the pathway bacterial outer membrane biogenesis; LPS lipid A biosynthesis. Catalyzes the N-acylation of UDP-3-O-acylglucosamine using 3-hydroxyacyl-ACP as the acyl donor. Is involved in the biosynthesis of lipid A, a phosphorylated glycolipid that anchors the lipopolysaccharide to the outer membrane of the cell. The chain is UDP-3-O-acylglucosamine N-acyltransferase from Alkalilimnicola ehrlichii (strain ATCC BAA-1101 / DSM 17681 / MLHE-1).